The primary structure comprises 227 residues: Uridylate kinase (227 aa).

11–12 (GS) provides a ligand contact to ATP. Gly-45 contributes to the UMP binding site. ATP contacts are provided by Gly-46 and Arg-50. UMP contacts are provided by residues Asp-67 and 114 to 120 (TEPGHTT). Positions 140, 146, and 149 each coordinate ATP.

This sequence belongs to the UMP kinase family. Homohexamer.

The protein localises to the cytoplasm. The catalysed reaction is UMP + ATP = UDP + ADP. It functions in the pathway pyrimidine metabolism; CTP biosynthesis via de novo pathway; UDP from UMP (UMPK route): step 1/1. Inhibited by UTP. In terms of biological role, catalyzes the reversible phosphorylation of UMP to UDP. In Thermoplasma volcanium (strain ATCC 51530 / DSM 4299 / JCM 9571 / NBRC 15438 / GSS1), this protein is Uridylate kinase.